We begin with the raw amino-acid sequence, 311 residues long: 4-hydroxy-3-methylbut-2-enyl diphosphate reductase (311 aa).

Residue cysteine 12 participates in [4Fe-4S] cluster binding. The (2E)-4-hydroxy-3-methylbut-2-enyl diphosphate site is built by histidine 41 and histidine 74. The dimethylallyl diphosphate site is built by histidine 41 and histidine 74. Positions 41 and 74 each coordinate isopentenyl diphosphate. Position 96 (cysteine 96) interacts with [4Fe-4S] cluster. (2E)-4-hydroxy-3-methylbut-2-enyl diphosphate is bound at residue histidine 124. Histidine 124 contributes to the dimethylallyl diphosphate binding site. Histidine 124 provides a ligand contact to isopentenyl diphosphate. Residue glutamate 126 is the Proton donor of the active site. Threonine 167 lines the (2E)-4-hydroxy-3-methylbut-2-enyl diphosphate pocket. A [4Fe-4S] cluster-binding site is contributed by cysteine 197. Serine 225, serine 226, asparagine 227, and serine 269 together coordinate (2E)-4-hydroxy-3-methylbut-2-enyl diphosphate. Dimethylallyl diphosphate contacts are provided by serine 225, serine 226, asparagine 227, and serine 269. Isopentenyl diphosphate contacts are provided by serine 225, serine 226, asparagine 227, and serine 269.

The protein belongs to the IspH family. Requires [4Fe-4S] cluster as cofactor.

The enzyme catalyses isopentenyl diphosphate + 2 oxidized [2Fe-2S]-[ferredoxin] + H2O = (2E)-4-hydroxy-3-methylbut-2-enyl diphosphate + 2 reduced [2Fe-2S]-[ferredoxin] + 2 H(+). The catalysed reaction is dimethylallyl diphosphate + 2 oxidized [2Fe-2S]-[ferredoxin] + H2O = (2E)-4-hydroxy-3-methylbut-2-enyl diphosphate + 2 reduced [2Fe-2S]-[ferredoxin] + 2 H(+). It participates in isoprenoid biosynthesis; dimethylallyl diphosphate biosynthesis; dimethylallyl diphosphate from (2E)-4-hydroxy-3-methylbutenyl diphosphate: step 1/1. It functions in the pathway isoprenoid biosynthesis; isopentenyl diphosphate biosynthesis via DXP pathway; isopentenyl diphosphate from 1-deoxy-D-xylulose 5-phosphate: step 6/6. Catalyzes the conversion of 1-hydroxy-2-methyl-2-(E)-butenyl 4-diphosphate (HMBPP) into a mixture of isopentenyl diphosphate (IPP) and dimethylallyl diphosphate (DMAPP). Acts in the terminal step of the DOXP/MEP pathway for isoprenoid precursor biosynthesis. The sequence is that of 4-hydroxy-3-methylbut-2-enyl diphosphate reductase from Aeromonas salmonicida (strain A449).